The chain runs to 589 residues: Zinc finger protein 703 (589 aa).

The tract at residues Ser102–Pro315 is disordered. The segment covering Ser113–Ser122 has biased composition (low complexity). Over residues Ser137 to Ser148 the composition is skewed to basic and acidic residues. Polar residues predominate over residues Asn179–Thr188. Residues Ser196–Ser206 show a composition bias toward low complexity. The span at Gln214 to His230 shows a compositional bias: polar residues. Residues Gly237–Asp250 show a composition bias toward low complexity. Positions Arg251–Ser262 are enriched in basic and acidic residues. A compositionally biased stretch (low complexity) spans Ser272–Gln299. The interval Val408 to Leu460 is required for interaction with Groucho and hdac2 plays an important role in repression of transcription. The segment at His462–His490 adopts a C2H2-type zinc-finger fold. A required for self-association and nuclear localization region spans residues Gly498 to Gln589.

This sequence belongs to the Elbow/Noc family. Self-associates. Interacts with nlz2. May interact with Groucho corepressor proteins.

It localises to the nucleus. The protein resides in the cytoplasm. Functionally, transcriptional corepressor which does not bind directly to DNA and may regulate transcription through recruitment of histone deacetylases to gene promoters. Required for segmental gene expression during hindbrain development. May regulate cell adhesion, migration and proliferation. The polypeptide is Zinc finger protein 703 (znf703) (Danio rerio (Zebrafish)).